Reading from the N-terminus, the 957-residue chain is ERC protein 2 (957 aa).

A compositionally biased stretch (polar residues) spans 1–13; sequence MYGSARTISNPEG. The interval 1 to 44 is disordered; that stretch reads MYGSARTISNPEGSPSRSPRLPRSPRLGHRRTSSGGGGGTGKTL. The segment covering 14–25 has biased composition (low complexity); sequence SPSRSPRLPRSP. Residues serine 65 and serine 666 each carry the phosphoserine modification. A coiled-coil region spans residues 140-917; the sequence is RQVRDSTMLD…RMKLMADNYD (778 aa). The tract at residues 760–957 is involved in binding to RIMS1; the sequence is DQNKKVANLK…DQDDEEGIWA (198 aa). A disordered region spans residues 918 to 957; the sequence is DDHHHYHHHHHHHHHRSPGRSQHSNHRPSPDQDDEEGIWA. Basic residues predominate over residues 922–943; it reads HYHHHHHHHHHRSPGRSQHSNH. Positions 948-957 are enriched in acidic residues; it reads DQDDEEGIWA.

As to quaternary structure, interacts with BSN, ERC1, PPFIA1, PPFIA2, PPFIA3 and PPFIA4. Interacts through its C-terminus with the PDZ domain of RIMS1. Part of a complex consisting of ERC2, RIMS1 and UNC13A. In terms of tissue distribution, predominantly expressed in brain, including hippocampus, cortex, cerebellum, amygdala and olfactory bulb.

The protein resides in the cytoplasm. It localises to the synapse. Its subcellular location is the presynaptic active zone. It is found in the cytoskeleton. Functionally, thought to be involved in the organization of the cytomatrix at the nerve terminals active zone (CAZ) which regulates neurotransmitter release. Seems to act together with BSN. May recruit liprin-alpha proteins to the CAZ. This chain is ERC protein 2 (Erc2), found in Rattus norvegicus (Rat).